The sequence spans 552 residues: MSDIAIIVSLLSLVAVLGLWIGHIKIKGVGLGIGGVLFGGIIISHCTHLYGIELDAHTLHFIQEFGLILFVYSIGIQVGPGFFASLRQSGLKLNGFAVMIVGLSGILVALIHKLFDVPLPVILGIFSGAVTNTPSLGAGQQVLTELGGDNITAVMGMSYAIAYPFGIIGILLSMWLIRIIFKVNIDKEAQEFDNNQNQQKEGLDTLNVRLTNPNLGGLKLKEIPDFESHTVIYSRLKRNDQLIVPNVDTVLNVGDVLHLVGEKATLRKMQLILGEEADVSVSTRGTIFRSERAVVTNENVFGKKIRHLMLKGKYEVVISRLNRAGVELIPNGEMALQFGDVLNLVGRQEDIETVRAIIGDAHQKLQQVQMLPIFVGIGLGVLLGSLPLYIPGFPVALKLGLAGGPLVVALILARIGSIGKLYWFMPPSANLALREIGIVLFLSVVGLKAGANFLDTLLSPEGLAWMGYGAIITFIPLIVTGFVARIYGKMNYLSLCGLLSGAMTDPPALAFANEIKDGHGAAALSYATVYPLVMFLRIILPQLLAILLWTAS.

The next 5 helical transmembrane spans lie at 4-24 (IAII…IGHI), 29-49 (VGLG…CTHL), 65-85 (FGLI…FFAS), 95-115 (GFAV…HKLF), and 161-181 (IAYP…RIIF). 2 consecutive RCK C-terminal domains span residues 190 to 275 (QEFD…ILGE) and 277 to 360 (ADVS…IIGD). 6 helical membrane-spanning segments follow: residues 370-390 (MLPI…PLYI), 402-424 (AGGP…LYWF), 438-458 (IVLF…DTLL), 463-483 (LAWM…TGFV), 492-512 (YLSL…LAFA), and 529-549 (VYPL…ILLW).

Belongs to the AAE transporter (TC 2.A.81) family. YidE subfamily.

Its subcellular location is the cell membrane. The polypeptide is Putative transport protein APL_0966 (Actinobacillus pleuropneumoniae serotype 5b (strain L20)).